Consider the following 636-residue polypeptide: NADP-dependent malic enzyme, chloroplastic (636 aa).

The segment at 1–28 (MLSTRTAAVAASASPASPWKLGGRSEGG) is disordered. Residues 1–62 (MLSTRTAAVA…LPPRRVDAVA (62 aa)) constitute a chloroplast transit peptide. Residues 7-18 (AAVAASASPASP) show a composition bias toward low complexity. Tyr-184 serves as the catalytic Proton donor. Arg-237 lines the NAD(+) pocket. The active-site Proton acceptor is Lys-255. Positions 327, 328, and 351 each coordinate a divalent metal cation. Asp-351 is a binding site for NAD(+). 380–396 (LFLGAGEAGTGIAELIA) provides a ligand contact to NADP(+). Asn-492 serves as a coordination point for NAD(+).

The protein belongs to the malic enzymes family. In terms of assembly, homotetramer. Mg(2+) serves as cofactor. The cofactor is Mn(2+).

The protein localises to the plastid. It localises to the chloroplast. It carries out the reaction (S)-malate + NADP(+) = pyruvate + CO2 + NADPH. It catalyses the reaction oxaloacetate + H(+) = pyruvate + CO2. It functions in the pathway photosynthesis; C4 acid pathway. The chloroplastic ME isoform decarboxylates malate shuttled from neighboring mesophyll cells. The CO(2) released is then refixed by ribulose-bisphosphate carboxylase. This pathway eliminates the photorespiratory loss of CO(2) that occurs in most plants. The chain is NADP-dependent malic enzyme, chloroplastic (MOD1) from Zea mays (Maize).